The primary structure comprises 291 residues: Sesquiterpene cyclase astC (291 aa).

The protein belongs to the HAD-like hydrolase superfamily.

The enzyme catalyses (2E,6E)-farnesyl diphosphate = (S,S)-drim-8-en-11-yl diphosphate. Its pathway is secondary metabolite biosynthesis; terpenoid biosynthesis. In terms of biological role, sesquiterpene cyclase; part of the gene cluster that mediates the biosynthesis of astellolides, drimane-type sesquiterpene esters that show antimicrobial, anti-inflammatory, and anti-tumor activities. The first step in astellolide biosynthesis is performed by the sesquiterpene cyclase astC that catalyzes the formation of drimanyl pyrophosphate from farnesyl pyrophosphate. Drimanyl pyrophosphate is then dephosphorylated by the sesquiterpene phosphatase astI to produce drimanyl monophosphate which is further dephosphorylated to drim-8-ene-11-ol by atsK. Drim-8-ene-11-ol is converted to confertifolin, probably by the cytochrome P450 monooxygenase astD and/or the dehydrogenase astE. The cytochrome P450 monooxygenases astB, astF and astJ then hydroxylate confertifolin at C6, C14, or C15 to form trihydroxy confertifolin. The nonribosomal peptide synthetase astA catalyzes ester bond formation between trihydroxy contifolin and benzoic acid (BA) or 4-hydroxy benzoic acid (4HBA), leading to the formation of dideacetyl astellolides A and B, respectively. Finally, the O-acetyltransferase astG converts dideacetyl astellolides A and B into deacetyl astellolides A and B. The sequence is that of Sesquiterpene cyclase astC from Aspergillus oryzae (strain ATCC 42149 / RIB 40) (Yellow koji mold).